The following is a 630-amino-acid chain: Very-long-chain aldehyde decarbonylase GL1-7 (630 aa).

4 consecutive transmembrane segments (helical) span residues 93–113 (LYLD…YAII), 126–146 (GALI…YWFH), 185–205 (FLLF…SVLA), and 325–345 (VWYM…AWIY). The 140-residue stretch at 133 to 272 (LHMGPVEFLY…MPFYDYIYNT (140 aa)) folds into the Fatty acid hydroxylase domain.

The protein belongs to the sterol desaturase family. As to quaternary structure, homodimer. In terms of tissue distribution, expressed in panicles at low levels.

The protein localises to the endoplasmic reticulum membrane. It carries out the reaction a long-chain fatty aldehyde + 2 NADPH + O2 + H(+) = a long-chain alkane + formate + 2 NADP(+) + H2O. Aldehyde decarbonylase involved in the conversion of aldehydes to alkanes. Core component of a very-long-chain alkane synthesis complex. The sequence is that of Very-long-chain aldehyde decarbonylase GL1-7 from Oryza sativa subsp. japonica (Rice).